An 81-amino-acid polypeptide reads, in one-letter code: MRYNSFLSVLALFNVLLWFTFILAISMTFSAINLLMSKKFTMKNVQPTRLDWFFVLLPYVIGLFFAIFDSATIGQVFFWGA.

A signal peptide spans 1–31 (MRYNSFLSVLALFNVLLWFTFILAISMTFSA). The chain crosses the membrane as a helical span at residues 52 to 74 (WFFVLLPYVIGLFFAIFDSATIG).

The protein localises to the membrane. This is an uncharacterized protein from Pasteurella multocida (strain Pm70).